Here is a 230-residue protein sequence, read N- to C-terminus: Dickkopf-like protein 1 (230 aa).

The N-terminal stretch at Met-1 to Ala-20 is a signal peptide. N-linked (GlcNAc...) asparagine glycans are attached at residues Asn-31, Asn-87, and Asn-102.

As to quaternary structure, interacts with SLXL1; Co-localize in seminiferous tubules. Interacts with SLY. N-glycosylated during spermatogenesis. Not N-glycosylated in mature sperm. As to expression, testis-specific. Abundant in the seminiferous tubules where it is associated with developing spermatocytes. Expressed only in testis (at protein level). Not detectable on postnatal days 4 and 9 but after day 18 it gradually increased as the development of testes progressed. Expressed at high levels in testis and at weak levels in epididymis.

Its subcellular location is the secreted. It is found in the cytoplasmic vesicle. The protein resides in the secretory vesicle. The protein localises to the acrosome. Functionally, involved in fertilization by facilitating sperm penetration of the zona pellucida. May promote spermatocyte apoptosis, thereby limiting sperm production. In adults, may reduce testosterone synthesis in Leydig cells. Is not essential either for development or fertility. In Mus musculus (Mouse), this protein is Dickkopf-like protein 1.